The primary structure comprises 250 residues: 1-(5-phosphoribosyl)-5-[(5-phosphoribosylamino)methylideneamino] imidazole-4-carboxamide isomerase (250 aa).

The active-site Proton acceptor is the Asp8. Asp129 (proton donor) is an active-site residue.

The protein belongs to the HisA/HisF family.

The protein resides in the cytoplasm. The catalysed reaction is 1-(5-phospho-beta-D-ribosyl)-5-[(5-phospho-beta-D-ribosylamino)methylideneamino]imidazole-4-carboxamide = 5-[(5-phospho-1-deoxy-D-ribulos-1-ylimino)methylamino]-1-(5-phospho-beta-D-ribosyl)imidazole-4-carboxamide. It participates in amino-acid biosynthesis; L-histidine biosynthesis; L-histidine from 5-phospho-alpha-D-ribose 1-diphosphate: step 4/9. The chain is 1-(5-phosphoribosyl)-5-[(5-phosphoribosylamino)methylideneamino] imidazole-4-carboxamide isomerase from Desulfovibrio desulfuricans (strain ATCC 27774 / DSM 6949 / MB).